A 130-amino-acid polypeptide reads, in one-letter code: Small ribosomal subunit protein uS9 (130 aa).

It belongs to the universal ribosomal protein uS9 family.

This is Small ribosomal subunit protein uS9 from Geobacillus thermodenitrificans (strain NG80-2).